The primary structure comprises 154 residues: Low molecular weight protein-tyrosine-phosphatase PtpA (154 aa).

The active-site Nucleophile is Cys-8. The active site involves Arg-14. The active-site Proton donor is the Asp-120.

This sequence belongs to the low molecular weight phosphotyrosine protein phosphatase family.

It catalyses the reaction O-phospho-L-tyrosyl-[protein] + H2O = L-tyrosyl-[protein] + phosphate. Dephosphorylates the phosphotyrosine-containing proteins. This chain is Low molecular weight protein-tyrosine-phosphatase PtpA (ptpA), found in Staphylococcus haemolyticus (strain JCSC1435).